Reading from the N-terminus, the 152-residue chain is MLP-like protein 165 (152 aa).

The protein belongs to the MLP family.

This chain is MLP-like protein 165 (MLP165), found in Arabidopsis thaliana (Mouse-ear cress).